Consider the following 67-residue polypeptide: Large ribosomal subunit protein uL29 (67 aa).

Belongs to the universal ribosomal protein uL29 family.

The sequence is that of Large ribosomal subunit protein uL29 from Pelotomaculum thermopropionicum (strain DSM 13744 / JCM 10971 / SI).